A 575-amino-acid chain; its full sequence is Stage VI sporulation protein D (575 aa).

The interval 159-502 is disordered; it reads EELSEPPAHS…ETKEPQTKES (344 aa). Basic and acidic residues predominate over residues 200 to 212; sequence GLREELETEKAES. Acidic residues-rich tracts occupy residues 229–238 and 249–264; these read KEEEESEELA and ETEE…EIEI. 3 stretches are compositionally biased toward basic and acidic residues: residues 266–275, 283–302, and 310–325; these read EIVKAKKETA, DVRE…HVGA, and AELH…KEET. The span at 438–448 shows a compositional bias: acidic residues; sequence EEEEQEEESFE. Over residues 449-464 the composition is skewed to basic and acidic residues; that stretch reads IEVRKTPSAEEPKEET. The span at 465-474 shows a compositional bias: polar residues; sequence PFQSFQLPES. Residues 493–502 are compositionally biased toward basic and acidic residues; the sequence is ETKEPQTKES. The LysM domain maps to 523–567; the sequence is KICIVQQEDTIERLCERYEITSQQLIRMNSLALDDELKAGQILYI.

Required for assembly of a normal spore coat. May be a component of the innermost layer of the spore coat that aids in its adherence to the prespore. This Bacillus subtilis (strain 168) protein is Stage VI sporulation protein D (spoVID).